We begin with the raw amino-acid sequence, 163 residues long: Odorant-binding protein 1a (163 aa).

An N-terminal signal peptide occupies residues 1–16 (MAKFLLLALTFGLAHA). Intrachain disulfides connect Cys-50–Cys-54 and Cys-69–Cys-161.

This sequence belongs to the calycin superfamily. Lipocalin family. May form a heterodimer with OBP1B. In terms of processing, the N-terminus may be blocked. As to expression, expressed in nasal mucosa (at protein level). Specifically detected in septal and lateral nasal glands.

Its subcellular location is the secreted. Binds the chemical odorant 2-isobutyl-3-methoxypyrazine. This Mus musculus (Mouse) protein is Odorant-binding protein 1a.